We begin with the raw amino-acid sequence, 393 residues long: Lipoyl synthase, mitochondrial (393 aa).

Cysteine 111, cysteine 116, cysteine 122, cysteine 142, cysteine 146, cysteine 149, and serine 357 together coordinate [4Fe-4S] cluster. Residues glutamate 127–leucine 346 form the Radical SAM core domain.

It belongs to the radical SAM superfamily. Lipoyl synthase family. [4Fe-4S] cluster is required as a cofactor.

It localises to the mitochondrion. It carries out the reaction [[Fe-S] cluster scaffold protein carrying a second [4Fe-4S](2+) cluster] + N(6)-octanoyl-L-lysyl-[protein] + 2 oxidized [2Fe-2S]-[ferredoxin] + 2 S-adenosyl-L-methionine + 4 H(+) = [[Fe-S] cluster scaffold protein] + N(6)-[(R)-dihydrolipoyl]-L-lysyl-[protein] + 4 Fe(3+) + 2 hydrogen sulfide + 2 5'-deoxyadenosine + 2 L-methionine + 2 reduced [2Fe-2S]-[ferredoxin]. It participates in protein modification; protein lipoylation via endogenous pathway; protein N(6)-(lipoyl)lysine from octanoyl-[acyl-carrier-protein]: step 2/2. Its function is as follows. Catalyzes the radical-mediated insertion of two sulfur atoms into the C-6 and C-8 positions of the octanoyl moiety bound to the lipoyl domains of lipoate-dependent enzymes, thereby converting the octanoylated domains into lipoylated derivatives. This Aedes aegypti (Yellowfever mosquito) protein is Lipoyl synthase, mitochondrial.